The following is a 669-amino-acid chain: Dynamin-related protein 4C (669 aa).

The tract at residues 1 to 21 is disordered; sequence MVKKKVATKKNSPSLAIAKKK. Residues 62-323 enclose the Dynamin-type G domain; the sequence is GIHLPTIVVV…QSSMIARCLP (262 aa). The G1 motif stretch occupies residues 72–79; the sequence is GDQSSGKS. A GTP-binding site is contributed by 72–79; sequence GDQSSGKS. Residues 97–99 form a G2 motif region; that stretch reads CTR. The tract at residues 171 to 174 is G3 motif; that stretch reads DLPG. GTP-binding positions include 171 to 175 and 240 to 243; these read DLPGI and TKAD. A G4 motif region spans residues 240 to 243; that stretch reads TKAD. Residue glutamate 273 is a region of interest, G5 motif. The GED domain occupies 575–669; that stretch reads AFDMKMRITS…AVAAIVDQNC (95 aa).

The protein belongs to the TRAFAC class dynamin-like GTPase superfamily. Dynamin/Fzo/YdjA family.

The protein resides in the cytoplasm. Its subcellular location is the cytoskeleton. Putative microtubule-associated force-producing protein, able to bind and hydrolyze GTP. The chain is Dynamin-related protein 4C (DRP4C) from Arabidopsis thaliana (Mouse-ear cress).